Consider the following 440-residue polypeptide: Xaa-Pro dipeptidase (440 aa).

5 residues coordinate Mn(2+): Asp244, Asp255, His335, Glu380, and Glu419.

This sequence belongs to the peptidase M24B family. Bacterial-type prolidase subfamily. It depends on Mn(2+) as a cofactor.

The catalysed reaction is Xaa-L-Pro dipeptide + H2O = an L-alpha-amino acid + L-proline. Functionally, splits dipeptides with a prolyl residue in the C-terminal position. The protein is Xaa-Pro dipeptidase of Shewanella putrefaciens (strain CN-32 / ATCC BAA-453).